Here is a 476-residue protein sequence, read N- to C-terminus: Sulfate adenylyltransferase subunit 1 (476 aa).

The tr-type G domain occupies K24 to E239. The interval G33–S40 is G1. G33–S40 provides a ligand contact to GTP. Residues G91–D95 are G2. Residues D112–G115 form a G3 region. GTP-binding positions include D112–H116 and N167–D170. The interval N167–D170 is G4. A G5 region spans residues S205–L207.

Belongs to the TRAFAC class translation factor GTPase superfamily. Classic translation factor GTPase family. CysN/NodQ subfamily. As to quaternary structure, heterodimer composed of CysD, the smaller subunit, and CysN.

The catalysed reaction is sulfate + ATP + H(+) = adenosine 5'-phosphosulfate + diphosphate. It participates in sulfur metabolism; hydrogen sulfide biosynthesis; sulfite from sulfate: step 1/3. Its function is as follows. With CysD forms the ATP sulfurylase (ATPS) that catalyzes the adenylation of sulfate producing adenosine 5'-phosphosulfate (APS) and diphosphate, the first enzymatic step in sulfur assimilation pathway. APS synthesis involves the formation of a high-energy phosphoric-sulfuric acid anhydride bond driven by GTP hydrolysis by CysN coupled to ATP hydrolysis by CysD. In Vibrio campbellii (strain ATCC BAA-1116), this protein is Sulfate adenylyltransferase subunit 1.